A 440-amino-acid polypeptide reads, in one-letter code: T-box transcription factor T homolog 2 (440 aa).

Residues 44 to 215 (LWEKFKSLTN…HNPFAKAFLD (172 aa)) constitute a DNA-binding region (T-box). Disordered stretches follow at residues 282–303 (APYP…DTAA) and 393–440 (TTAS…MPSM). A compositionally biased stretch (polar residues) spans 409-440 (STDSGYGHSTTPPAPQTRITSNNWSPMTMPSM).

Mesoderm and notochord.

It is found in the nucleus. Functionally, involved in the transcriptional regulation of genes required for mesoderm formation and differentiation. This is T-box transcription factor T homolog 2 from Branchiostoma floridae (Florida lancelet).